Reading from the N-terminus, the 2742-residue chain is Neurobeachin-like protein 2 (2742 aa).

Disordered regions lie at residues 1312 to 1333 and 1356 to 1434; these read ALSPPPTELPADSSDVFLPSES and LERA…QQTP. Residues 1384-1394 show a composition bias toward pro residues; sequence TPSPLDGPRPF. Positions 1421–1433 are enriched in polar residues; it reads GDDTSNTSNPQQT. Phosphothreonine is present on T1855. A BEACH-type PH domain is found at 1903–2028; the sequence is EKREKLVLSA…LRNQVYSLLL (126 aa). The region spanning 2041 to 2333 is the BEACH domain; that stretch reads RSPLEMLRAS…QLLKEPHPPR (293 aa). WD repeat units follow at residues 2374-2412, 2436-2479, 2482-2519, 2532-2570, 2577-2619, 2627-2662, and 2670-2705; these read LVLALVPHRQSHSFITQSSSDMLVTVSASGLLGTHTWLP, KLLS…SLPR, LLNQLSRHLDIVTCLALDTCGIYLISGSRDTTCMVWRL, KPVQVLYGHVAAVSCVAISTELDMAVSGSEDGTVIIHTV, AALR…TYSL, RLRASVTLTEQPTALTVAEDFVLLGTAQCSLHILHL, and PPLPMKVPVHSVSVTKERSHVLVGLEDGKLIVVGAG. Phosphoserine occurs at positions 2727 and 2730.

This sequence belongs to the WD repeat neurobeachin family.

Its subcellular location is the endoplasmic reticulum. In terms of biological role, probably involved in thrombopoiesis. Plays a role in the development or secretion of alpha-granules, that contain several growth factors important for platelet biogenesis. This Mus musculus (Mouse) protein is Neurobeachin-like protein 2 (Nbeal2).